A 338-amino-acid chain; its full sequence is HLA class I histocompatibility antigen, alpha chain G (338 aa).

Positions 1-24 (MVVMAPRTLFLLLSGALTLTETWA) are cleaved as a signal peptide. The interval 3 to 11 (VMAPRTLFL) is VL9 epitope. The alpha-1 stretch occupies residues 25 to 114 (GSHSMRYFSA…LRGYYNQSEA (90 aa)). Topologically, residues 25-308 (GSHSMRYFSA…KQSSLPTIPI (284 aa)) are extracellular. 4 residues coordinate a peptide antigen: tyrosine 31, histidine 94, asparagine 101, and tyrosine 108. The N-linked (GlcNAc...) asparagine glycan is linked to asparagine 110. An alpha-2 region spans residues 115–206 (SSHTLQWMIG…ENGKEMLQRA (92 aa)). An intrachain disulfide couples cysteine 125 to cysteine 188. Positions 167, 170, 179, 180, 183, and 195 each coordinate a peptide antigen. The alpha-3 stretch occupies residues 207-298 (DPPKTHVTHH…GLPEPLMLRW (92 aa)). The Ig-like C1-type domain occupies 209-299 (PKTHVTHHPV…LPEPLMLRWK (91 aa)). The cysteines at positions 227 and 283 are disulfide-linked. Residues 299-308 (KQSSLPTIPI) are connecting peptide. A helical membrane pass occupies residues 309–332 (MGIVAGLVVLAAVVTGAAVAAVLW). At 333 to 338 (RKKSSD) the chain is on the cytoplasmic side. Residues 334–336 (KKS) carry the ER-retrieval signal motif.

Belongs to the MHC class I family. As to quaternary structure, forms a heterotrimer with B2M and a self-peptide (peptide-bound HLA-G-B2M). HLA-G-B2M complex interacts with components of the antigen processing machinery TAPBP and TAP1-TAP2 complex; this interaction is required for loading of high affinity peptides and heterotrimer translocation to the cell surface. Interacts with CALCR; this interaction is required for appropriate folding. Interacts with COPB1; this interaction mediates the endoplasmic reticulum (ER) retrieval of HLA-G-B2M complexes that bind low affinity peptides. On the cell surface, peptide-bound HLA-G-B2M molecules (referred to as monomers) can form disulfide-linked homomultimers, homodimers and homotrimers. Interacts with KIR2DL4; this interaction is direct. Interacts with LILRB1 and LILRB2 receptors; this interaction is direct. Interacts with CD160; this interactions is direct. Interacts with CD8A homodimer; this interaction is direct and might down-regulate T cell receptor signaling. Isoform 2: Forms a non-disulfide-linked homodimer and interacts with LILRB2. In terms of processing, N-glycosylated. Produced by proteolytic cleavage at the cell surface (shedding) by matrix metalloproteinase MMP2. In terms of tissue distribution, expressed in adult eye. Expressed in immune cell subsets including monocytes, myeloid and plasmacytoid dendritic cells and regulatory T cells (Tr1)(at protein level). Secreted by follicular dendritic cell and follicular helper T cells. As to expression, detected in physiological fluids including amniotic fluid and serum. Expressed in placenta, amniotic membrane, skin, cord blood and peripheral blood mononuclear cells.

Its subcellular location is the cell membrane. It is found in the endoplasmic reticulum membrane. The protein resides in the early endosome membrane. The protein localises to the secreted. It localises to the early endosome. Its subcellular location is the cell projection. It is found in the filopodium membrane. Its function is as follows. Non-classical major histocompatibility class Ib molecule involved in immune regulatory processes at the maternal-fetal interface. In complex with B2M/beta-2 microglobulin binds a limited repertoire of nonamer self-peptides derived from intracellular proteins including histones and ribosomal proteins. Peptide-bound HLA-G-B2M complex acts as a ligand for inhibitory/activating KIR2DL4, LILRB1 and LILRB2 receptors on uterine immune cells to promote fetal development while maintaining maternal-fetal tolerance. Upon interaction with KIR2DL4 and LILRB1 receptors on decidual NK cells, it triggers NK cell senescence-associated secretory phenotype as a molecular switch to promote vascular remodeling and fetal growth in early pregnancy. Through interaction with KIR2DL4 receptor on decidual macrophages induces pro-inflammatory cytokine production mainly associated with tissue remodeling. Through interaction with LILRB2 receptor triggers differentiation of type 1 regulatory T cells and myeloid-derived suppressor cells, both of which actively maintain maternal-fetal tolerance. May play a role in balancing tolerance and antiviral-immunity at maternal-fetal interface by keeping in check the effector functions of NK, CD8+ T cells and B cells. Reprograms B cells toward an immune suppressive phenotype via LILRB1. May induce immune activation/suppression via intercellular membrane transfer (trogocytosis), likely enabling interaction with KIR2DL4, which resides mostly in endosomes. Through interaction with the inhibitory receptor CD160 on endothelial cells may control angiogenesis in immune privileged sites. Functionally, likely does not bind B2M and presents peptides. Negatively regulates NK cell- and CD8+ T cell-mediated cytotoxicity. In terms of biological role, non-classical major histocompatibility class Ib molecule involved in immune regulatory processes at the maternal-fetal interface. In complex with B2M/beta-2 microglobulin binds a limited repertoire of nonamer self-peptides derived from intracellular proteins including histones and ribosomal proteins. Peptide-bound HLA-G-B2M complex acts as a ligand for inhibitory/activating KIR2DL4, LILRB1 and LILRB2 receptors on uterine immune cells to promote fetal development while maintaining maternal-fetal tolerance. Upon interaction with KIR2DL4 and LILRB1 receptors on decidual NK cells, it triggers NK cell senescence-associated secretory phenotype as a molecular switch to promote vascular remodeling and fetal growth in early pregnancy. Through interaction with KIR2DL4 receptor on decidual macrophages induces pro-inflammatory cytokine production mainly associated with tissue remodeling. Through interaction with LILRB2 receptor triggers differentiation of type 1 regulatory T cells and myeloid-derived suppressor cells, both of which actively maintain maternal-fetal tolerance. Reprograms B cells toward an immune suppressive phenotype via LILRB1. Likely does not bind B2M and presents peptides. This Homo sapiens (Human) protein is HLA class I histocompatibility antigen, alpha chain G.